Reading from the N-terminus, the 299-residue chain is Probable lipid kinase YegS (299 aa).

A DAGKc domain is found at 2-133 (ADLPASLLIL…IDIAQVNKET (132 aa)). ATP contacts are provided by residues T40, 66–72 (GDGTINE), and T95. Residues L215, D218, and L220 each coordinate Mg(2+). The active-site Proton acceptor is the E271.

The protein belongs to the diacylglycerol/lipid kinase family. YegS lipid kinase subfamily. Mg(2+) is required as a cofactor. The cofactor is Ca(2+).

The protein resides in the cytoplasm. Functionally, probably phosphorylates lipids; the in vivo substrate is unknown. The sequence is that of Probable lipid kinase YegS from Escherichia fergusonii (strain ATCC 35469 / DSM 13698 / CCUG 18766 / IAM 14443 / JCM 21226 / LMG 7866 / NBRC 102419 / NCTC 12128 / CDC 0568-73).